The chain runs to 388 residues: 4-hydroxy-3-methylbut-2-en-1-yl diphosphate synthase (flavodoxin) (388 aa).

Residues 1-22 (MTSVNLGMPAAPQPVLSPRRKT) form a disordered region. Positions 281, 284, 316, and 323 each coordinate [4Fe-4S] cluster.

The protein belongs to the IspG family. [4Fe-4S] cluster serves as cofactor.

The catalysed reaction is (2E)-4-hydroxy-3-methylbut-2-enyl diphosphate + oxidized [flavodoxin] + H2O + 2 H(+) = 2-C-methyl-D-erythritol 2,4-cyclic diphosphate + reduced [flavodoxin]. The protein operates within isoprenoid biosynthesis; isopentenyl diphosphate biosynthesis via DXP pathway; isopentenyl diphosphate from 1-deoxy-D-xylulose 5-phosphate: step 5/6. Functionally, converts 2C-methyl-D-erythritol 2,4-cyclodiphosphate (ME-2,4cPP) into 1-hydroxy-2-methyl-2-(E)-butenyl 4-diphosphate. The protein is 4-hydroxy-3-methylbut-2-en-1-yl diphosphate synthase (flavodoxin) of Kocuria rhizophila (strain ATCC 9341 / DSM 348 / NBRC 103217 / DC2201).